Here is a 254-residue protein sequence, read N- to C-terminus: Large ribosomal subunit protein uL4 (254 aa).

The tract at residues 45–70 (PWGNDPEAGKRTSAKGWGSGRGTARV) is disordered.

Belongs to the universal ribosomal protein uL4 family. Part of the 50S ribosomal subunit.

One of the primary rRNA binding proteins, this protein initially binds near the 5'-end of the 23S rRNA. It is important during the early stages of 50S assembly. It makes multiple contacts with different domains of the 23S rRNA in the assembled 50S subunit and ribosome. In terms of biological role, forms part of the polypeptide exit tunnel. This is Large ribosomal subunit protein uL4 from Methanobrevibacter smithii (strain ATCC 35061 / DSM 861 / OCM 144 / PS).